Consider the following 99-residue polypeptide: Small ribosomal subunit protein uS14m (99 aa).

This sequence belongs to the universal ribosomal protein uS14 family.

Its subcellular location is the mitochondrion. This chain is Small ribosomal subunit protein uS14m (RPS14), found in Acanthamoeba castellanii (Amoeba).